A 391-amino-acid polypeptide reads, in one-letter code: D-alanine--D-alanine ligase (391 aa).

The disordered stretch occupies residues 1 to 24 (MSSENLPQSPERAESPQAPRRKPR). The ATP-grasp domain maps to 171-381 (KRVFLSFGLP…YPELVDRLIQ (211 aa)). 207–262 (AGEHGWPLFIKPARGGSSMGITKVDSVEGLDAAIEEARRHDPKFLVESLLRGREIE) provides a ligand contact to ATP. Aspartate 335, glutamate 348, and asparagine 350 together coordinate Mg(2+).

This sequence belongs to the D-alanine--D-alanine ligase family. The cofactor is Mg(2+). Mn(2+) is required as a cofactor.

Its subcellular location is the cytoplasm. The enzyme catalyses 2 D-alanine + ATP = D-alanyl-D-alanine + ADP + phosphate + H(+). It participates in cell wall biogenesis; peptidoglycan biosynthesis. Cell wall formation. This is D-alanine--D-alanine ligase from Streptomyces griseus subsp. griseus (strain JCM 4626 / CBS 651.72 / NBRC 13350 / KCC S-0626 / ISP 5235).